The following is a 297-amino-acid chain: Probable endonuclease 4 (297 aa).

Zn(2+) is bound by residues His68, His109, Glu144, Asp178, His181, His213, Asp226, His228, and Glu258.

This sequence belongs to the AP endonuclease 2 family. Zn(2+) is required as a cofactor.

It carries out the reaction Endonucleolytic cleavage to 5'-phosphooligonucleotide end-products.. Functionally, endonuclease IV plays a role in DNA repair. It cleaves phosphodiester bonds at apurinic or apyrimidinic (AP) sites, generating a 3'-hydroxyl group and a 5'-terminal sugar phosphate. This chain is Probable endonuclease 4, found in Enterococcus faecalis (strain ATCC 700802 / V583).